The chain runs to 88 residues: Acyl-CoA-binding domain-containing protein 7 (88 aa).

An ACB domain is found at 3 to 88 (LQADFDKAAK…AKELIEKYGI (86 aa)). An acyl-CoA contacts are provided by residues Arg-15, 30–34 (YGLYK), Lys-56, and Tyr-75.

This sequence belongs to the ACBD7 family.

Functionally, binds medium- and long-chain acyl-CoA esters. In Bos taurus (Bovine), this protein is Acyl-CoA-binding domain-containing protein 7 (ACBD7).